The sequence spans 711 residues: C6 finger domain transcription factor nscR (711 aa).

The zn(2)-C6 fungal-type DNA-binding region spans 17 to 43 (CELCRERKVKCDKLDPCTNCSSAGVIC). Residues 372–394 (SPPKHINDSDFDPTTSHDVPDRE) are disordered.

The protein localises to the nucleus. Its function is as follows. Transcription factor that specifically regulates the neosartoricin B biosynthesis gene cluster. This chain is C6 finger domain transcription factor nscR, found in Trichophyton tonsurans (strain CBS 112818) (Scalp ringworm fungus).